The following is a 233-amino-acid chain: MSNNQSRYENRDKRRKANLVLNILIAIVSILIVVVAANLFINSPSSKDVSKDSETAQKQESPASGKTEKKSDEDIKDSKKDTSDSEKDSEKSSDSDSKKDDSSSKKDDSDSDSSSDSAGDGLKDAKVTEGGSSSDVEKTYENPDWKAVGTEQTGEHAATYDSSSQDWAEMLKAISYATGVSTDNMTVLWLGNNGSPQDAKGKILDKATGNKYQVTITWVDEKGWKPTKVEKLK.

Residues 21–41 (LNILIAIVSILIVVVAANLFI) form a helical membrane-spanning segment. The segment at 44 to 163 (PSSKDVSKDS…GEHAATYDSS (120 aa)) is disordered. 3 stretches are compositionally biased toward basic and acidic residues: residues 48 to 57 (DVSKDSETAQ), 66 to 108 (KTEK…KKDD), and 135 to 144 (DVEKTYENPD).

It localises to the cell membrane. This is an uncharacterized protein from Bacillus subtilis (strain 168).